Here is a 134-residue protein sequence, read N- to C-terminus: Loki profilin-1 (134 aa).

Positions 55 to 62 (LALGKKGI) are loki loop.

It belongs to the Asgard profilin family.

Its subcellular location is the cytoplasm. It localises to the cytoskeleton. Inhibition of rabbit actin polymerization is reduced by phosphatidylinositol-(4,5)-P2(1,2-dipalmitoyl), a soluble form of the phospholipid phosphatidylinositol, suggesting an unknown lipid might regulate actin-profilin interaction in vivo. In terms of biological role, binds to actin and affects the structure of the cytoskeleton. At high concentrations inhibits spontaneous rabbit actin nucleation. This strongly suggests this archaea has a profilin-regulated actin system, and actin-type genes can be identified in this organism. The protein is Loki profilin-1 of Lokiarchaeum sp. (strain GC14_75).